The chain runs to 521 residues: Bifunctional purine biosynthesis protein PurH (521 aa).

The MGS-like domain maps to 1–145 (MIKQALISVS…KNHRDVTVIV (145 aa)).

Belongs to the PurH family.

The enzyme catalyses (6R)-10-formyltetrahydrofolate + 5-amino-1-(5-phospho-beta-D-ribosyl)imidazole-4-carboxamide = 5-formamido-1-(5-phospho-D-ribosyl)imidazole-4-carboxamide + (6S)-5,6,7,8-tetrahydrofolate. It catalyses the reaction IMP + H2O = 5-formamido-1-(5-phospho-D-ribosyl)imidazole-4-carboxamide. The protein operates within purine metabolism; IMP biosynthesis via de novo pathway; 5-formamido-1-(5-phospho-D-ribosyl)imidazole-4-carboxamide from 5-amino-1-(5-phospho-D-ribosyl)imidazole-4-carboxamide (10-formyl THF route): step 1/1. Its pathway is purine metabolism; IMP biosynthesis via de novo pathway; IMP from 5-formamido-1-(5-phospho-D-ribosyl)imidazole-4-carboxamide: step 1/1. The polypeptide is Bifunctional purine biosynthesis protein PurH (Burkholderia multivorans (strain ATCC 17616 / 249)).